We begin with the raw amino-acid sequence, 118 residues long: Small ribosomal subunit protein uS13 (118 aa).

The disordered stretch occupies residues S94–K118.

The protein belongs to the universal ribosomal protein uS13 family. As to quaternary structure, part of the 30S ribosomal subunit. Forms a loose heterodimer with protein S19. Forms two bridges to the 50S subunit in the 70S ribosome.

Its function is as follows. Located at the top of the head of the 30S subunit, it contacts several helices of the 16S rRNA. In the 70S ribosome it contacts the 23S rRNA (bridge B1a) and protein L5 of the 50S subunit (bridge B1b), connecting the 2 subunits; these bridges are implicated in subunit movement. Contacts the tRNAs in the A and P-sites. This is Small ribosomal subunit protein uS13 from Buchnera aphidicola subsp. Acyrthosiphon pisum (strain 5A).